A 599-amino-acid chain; its full sequence is Glutamine--fructose-6-phosphate aminotransferase [isomerizing] (599 aa).

Cys2 (nucleophile; for GATase activity) is an active-site residue. The Glutamine amidotransferase type-2 domain maps to 2 to 223 (CGIIGYIGNE…DRDIVILRKE (222 aa)). SIS domains lie at 286-423 (LGKE…IIGK) and 452-589 (IAEE…VDKP). Lys594 acts as the For Fru-6P isomerization activity in catalysis.

As to quaternary structure, homodimer.

Its subcellular location is the cytoplasm. The catalysed reaction is D-fructose 6-phosphate + L-glutamine = D-glucosamine 6-phosphate + L-glutamate. Its function is as follows. Catalyzes the first step in hexosamine metabolism, converting fructose-6P into glucosamine-6P using glutamine as a nitrogen source. This chain is Glutamine--fructose-6-phosphate aminotransferase [isomerizing] (glmS), found in Methanococcus maripaludis (strain DSM 14266 / JCM 13030 / NBRC 101832 / S2 / LL).